A 312-amino-acid polypeptide reads, in one-letter code: Coproporphyrin III ferrochelatase (312 aa).

Residues tyrosine 13, arginine 30, 46–47 (RY), serine 54, and tyrosine 125 contribute to the Fe-coproporphyrin III site. 2 residues coordinate Fe(2+): histidine 182 and glutamate 263.

This sequence belongs to the ferrochelatase family.

It localises to the cytoplasm. It carries out the reaction Fe-coproporphyrin III + 2 H(+) = coproporphyrin III + Fe(2+). Its pathway is porphyrin-containing compound metabolism; protoheme biosynthesis. Involved in coproporphyrin-dependent heme b biosynthesis. Catalyzes the insertion of ferrous iron into coproporphyrin III to form Fe-coproporphyrin III. The chain is Coproporphyrin III ferrochelatase from Oceanobacillus iheyensis (strain DSM 14371 / CIP 107618 / JCM 11309 / KCTC 3954 / HTE831).